We begin with the raw amino-acid sequence, 787 residues long: uncharacterized protein (787 aa).

At M1 the chain carries N-acetylmethionine. Disordered regions lie at residues 1-115 (MFDG…NDHK), 130-200 (TNPF…QRSE), and 217-238 (VSSG…ASQD). A compositionally biased stretch (polar residues) spans 36-54 (VPSTIKKSTNIARTSTAET). Residue S63 is modified to Phosphoserine. Positions 130 to 142 (TNPFTTSANSNAH) are enriched in polar residues. Positions 160-169 (SITTSISNNT) are enriched in low complexity. Residues 170 to 184 (TKEEIESNNDSERDS) are compositionally biased toward basic and acidic residues. A compositionally biased stretch (low complexity) spans 218 to 230 (SSGSSLSLDTSEN). A phosphoserine mark is found at S254, S313, S342, S345, S390, S477, S492, S546, S683, and S699.

Its subcellular location is the cytoplasm. This is an uncharacterized protein from Saccharomyces cerevisiae (strain ATCC 204508 / S288c) (Baker's yeast).